A 154-amino-acid chain; its full sequence is Ribosomal RNA large subunit methyltransferase H (154 aa).

Residue Gly103 participates in S-adenosyl-L-methionine binding.

Belongs to the RNA methyltransferase RlmH family. Homodimer.

The protein resides in the cytoplasm. It catalyses the reaction pseudouridine(1915) in 23S rRNA + S-adenosyl-L-methionine = N(3)-methylpseudouridine(1915) in 23S rRNA + S-adenosyl-L-homocysteine + H(+). Its function is as follows. Specifically methylates the pseudouridine at position 1915 (m3Psi1915) in 23S rRNA. The sequence is that of Ribosomal RNA large subunit methyltransferase H from Gemmatimonas aurantiaca (strain DSM 14586 / JCM 11422 / NBRC 100505 / T-27).